The sequence spans 238 residues: Urease subunit alpha (238 aa).

The interval 1–102 (MKLTPKELDK…LVTVHTPIEA (102 aa)) is urease gamma. The urease beta stretch occupies residues 103–238 (NGKLVPGELF…DDNYVKTIKE (136 aa)).

It in the N-terminal section; belongs to the urease gamma subunit family. This sequence in the C-terminal section; belongs to the urease beta subunit family. Heterohexamer of 3 UreA (alpha) and 3 UreB (beta) subunits. Four heterohexamers assemble to form a 16 nm dodecameric complex.

It catalyses the reaction urea + 2 H2O + H(+) = hydrogencarbonate + 2 NH4(+). The protein operates within nitrogen metabolism; urea degradation; CO(2) and NH(3) from urea (urease route): step 1/1. The polypeptide is Urease subunit alpha (Helicobacter pylori (strain J99 / ATCC 700824) (Campylobacter pylori J99)).